Here is a 242-residue protein sequence, read N- to C-terminus: UDP-2,3-diacylglucosamine hydrolase (242 aa).

Mn(2+) contacts are provided by Asp9, His11, Asp42, Asn79, and His114. Asn79–Arg80 contributes to the substrate binding site. Substrate is bound by residues Asp122, Ser160, Asn164, Lys167, and His195. The Mn(2+) site is built by His195 and His197.

It belongs to the LpxH family. Requires Mn(2+) as cofactor.

The protein resides in the cell inner membrane. It carries out the reaction UDP-2-N,3-O-bis[(3R)-3-hydroxytetradecanoyl]-alpha-D-glucosamine + H2O = 2-N,3-O-bis[(3R)-3-hydroxytetradecanoyl]-alpha-D-glucosaminyl 1-phosphate + UMP + 2 H(+). The protein operates within glycolipid biosynthesis; lipid IV(A) biosynthesis; lipid IV(A) from (3R)-3-hydroxytetradecanoyl-[acyl-carrier-protein] and UDP-N-acetyl-alpha-D-glucosamine: step 4/6. Its function is as follows. Hydrolyzes the pyrophosphate bond of UDP-2,3-diacylglucosamine to yield 2,3-diacylglucosamine 1-phosphate (lipid X) and UMP by catalyzing the attack of water at the alpha-P atom. Involved in the biosynthesis of lipid A, a phosphorylated glycolipid that anchors the lipopolysaccharide to the outer membrane of the cell. The chain is UDP-2,3-diacylglucosamine hydrolase from Shewanella loihica (strain ATCC BAA-1088 / PV-4).